A 215-amino-acid chain; its full sequence is HTH-type transcriptional repressor FabR (215 aa).

The region spanning 10 to 70 is the HTH tetR-type domain; it reads KTRRSLVEAA…TMVDESGLML (61 aa). The H-T-H motif DNA-binding region spans 33–52; sequence SLREVAREAGIAPTSFYRHF.

As to quaternary structure, homodimer.

Its subcellular location is the cytoplasm. Its function is as follows. Represses the transcription of fabB, involved in unsaturated fatty acid (UFA) biosynthesis. By controlling UFA production, FabR directly influences the physical properties of the membrane bilayer. The chain is HTH-type transcriptional repressor FabR from Escherichia coli O139:H28 (strain E24377A / ETEC).